Reading from the N-terminus, the 217-residue chain is MNQTLLSDFGTPVERVERALEALRNGRGVMVLDDENRENEGDMIFAAETMTVEQMALTIRHGSGIVCLCLTEERRQQLELPMMVTNNSSQFQTAFTVTIEAAQGVTTGVSASDRLTTIRAAVADNAKPSDLNRPGHVFPLRAQPGGVLSRRGHTEATIDLVSMAGFKPAGVLCELTNDDGSMAHAPEVILFAKQHDMTVLTIEDLVAYRQAHEQKAS.

D-ribulose 5-phosphate-binding positions include 37–38 (RE), D42, 150–154 (RRGHT), and E174. E38 provides a ligand contact to Mg(2+). H153 is a Mg(2+) binding site.

The protein belongs to the DHBP synthase family. In terms of assembly, homodimer. It depends on Mg(2+) as a cofactor. The cofactor is Mn(2+).

It catalyses the reaction D-ribulose 5-phosphate = (2S)-2-hydroxy-3-oxobutyl phosphate + formate + H(+). Its pathway is cofactor biosynthesis; riboflavin biosynthesis; 2-hydroxy-3-oxobutyl phosphate from D-ribulose 5-phosphate: step 1/1. Functionally, catalyzes the conversion of D-ribulose 5-phosphate to formate and 3,4-dihydroxy-2-butanone 4-phosphate. This is 3,4-dihydroxy-2-butanone 4-phosphate synthase from Serratia proteamaculans (strain 568).